Here is a 334-residue protein sequence, read N- to C-terminus: HTH-type transcriptional repressor PurR (334 aa).

An HTH lacI-type domain is found at 2-56 (ATIKDVAKMAGVSTTTVSHVINKTRFVAAETEKLVLQAIQELNYSPSAVARSLKV). The H-T-H motif DNA-binding region spans 4 to 23 (IKDVAKMAGVSTTTVSHVIN). Residues 48–56 (SAVARSLKV) mediate DNA binding. The hypoxanthine site is built by tyrosine 73, lysine 189, threonine 191, phenylalanine 220, and aspartate 274.

In terms of assembly, homodimer.

Its pathway is purine metabolism; purine nucleotide biosynthesis [regulation]. Its function is as follows. Is the main repressor of the genes involved in the de novo synthesis of purine nucleotides, regulating purB, purC, purEK, purF, purHD, purL, purMN and guaBA expression. PurR is allosterically activated to bind its cognate DNA by binding the purine corepressors, hypoxanthine or guanine, thereby effecting transcription repression. In Pasteurella multocida (strain Pm70), this protein is HTH-type transcriptional repressor PurR.